Consider the following 180-residue polypeptide: Large ribosomal subunit protein uL6 (180 aa).

Belongs to the universal ribosomal protein uL6 family. In terms of assembly, part of the 50S ribosomal subunit.

This protein binds to the 23S rRNA, and is important in its secondary structure. It is located near the subunit interface in the base of the L7/L12 stalk, and near the tRNA binding site of the peptidyltransferase center. The sequence is that of Large ribosomal subunit protein uL6 from Christiangramia forsetii (strain DSM 17595 / CGMCC 1.15422 / KT0803) (Gramella forsetii).